A 106-amino-acid polypeptide reads, in one-letter code: Class II hydrophobin 6 (106 aa).

The first 16 residues, 1–16 (MQFFTVATLFLATAFA), serve as a signal peptide directing secretion. Cystine bridges form between Cys-36–Cys-86, Cys-47–Cys-77, Cys-48–Cys-60, and Cys-87–Cys-98.

Belongs to the cerato-ulmin hydrophobin family. Homodimer. Homodimers further self-assemble to form highly ordered films at water-air interfaces through intermolecular interactions.

The protein resides in the secreted. It localises to the cell wall. Aerial growth, conidiation, and dispersal of filamentous fungi in the environment rely upon a capability of their secreting small amphipathic proteins called hydrophobins (HPBs) with low sequence identity. Class I can self-assemble into an outermost layer of rodlet bundles on aerial cell surfaces, conferring cellular hydrophobicity that supports fungal growth, development and dispersal; whereas Class II form highly ordered films at water-air interfaces through intermolecular interactions but contribute nothing to the rodlet structure. HFB2-6 is a class II hydrophobin that has a function in root colonization. Acts as an effector in poplar by up-regulating the expression of genes related to both the jasmonic acid and salicylic acid signal transduction pathways, which not only causes induced systemic resistance (ISR), but also systemic acquired resistance (SAR), giving poplar broad-spectrum resistance to pathogens. Also induces genes related to auxin signal transduction to promote poplar growth. Plays roles in interactions with both biotic and abiotic environmental conditions such as the presence of the pathogen Alternaria alternata or nutrient starvation conditions. This chain is Class II hydrophobin 6, found in Trichoderma asperellum (strain ATCC 204424 / CBS 433.97 / NBRC 101777).